We begin with the raw amino-acid sequence, 102 residues long: Small ribosomal subunit protein uS14 (102 aa).

This sequence belongs to the universal ribosomal protein uS14 family. As to quaternary structure, part of the 30S ribosomal subunit. Contacts proteins S3 and S10.

Binds 16S rRNA, required for the assembly of 30S particles and may also be responsible for determining the conformation of the 16S rRNA at the A site. This chain is Small ribosomal subunit protein uS14, found in Wolbachia sp. subsp. Brugia malayi (strain TRS).